A 393-amino-acid chain; its full sequence is DNA-directed RNA polymerase subunit Rpo1C (393 aa).

The protein belongs to the RNA polymerase beta' chain family. In terms of assembly, part of the 13-subunit RNA polymerase complex. Interacts with TFS4.

The protein localises to the cytoplasm. It carries out the reaction RNA(n) + a ribonucleoside 5'-triphosphate = RNA(n+1) + diphosphate. Functionally, DNA-dependent RNA polymerase (RNAP) catalyzes the transcription of DNA into RNA using the four ribonucleoside triphosphates as substrates. Forms part of the jaw domain. Reconstitution experiments show this subunit is required for basic activity. This is DNA-directed RNA polymerase subunit Rpo1C from Sulfolobus acidocaldarius (strain ATCC 33909 / DSM 639 / JCM 8929 / NBRC 15157 / NCIMB 11770).